Consider the following 344-residue polypeptide: Uroporphyrinogen decarboxylase (344 aa).

Substrate-binding positions include 23-27 (RQAGR), D73, Y149, T204, and H321.

Belongs to the uroporphyrinogen decarboxylase family. Homodimer.

It localises to the cytoplasm. It carries out the reaction uroporphyrinogen III + 4 H(+) = coproporphyrinogen III + 4 CO2. The protein operates within porphyrin-containing compound metabolism; protoporphyrin-IX biosynthesis; coproporphyrinogen-III from 5-aminolevulinate: step 4/4. Catalyzes the decarboxylation of four acetate groups of uroporphyrinogen-III to yield coproporphyrinogen-III. The protein is Uroporphyrinogen decarboxylase of Francisella philomiragia subsp. philomiragia (strain ATCC 25017 / CCUG 19701 / FSC 153 / O#319-036).